The sequence spans 298 residues: Acetyl-coenzyme A carboxylase carboxyl transferase subunit beta (298 aa).

The CoA carboxyltransferase N-terminal domain maps to 26-295 (LWIKCPETGE…DNANAVVPLA (270 aa)).

This sequence belongs to the AccD/PCCB family. Acetyl-CoA carboxylase is a heterohexamer composed of biotin carboxyl carrier protein (AccB), biotin carboxylase (AccC) and two subunits each of ACCase subunit alpha (AccA) and ACCase subunit beta (AccD).

The protein resides in the cytoplasm. The catalysed reaction is N(6)-carboxybiotinyl-L-lysyl-[protein] + acetyl-CoA = N(6)-biotinyl-L-lysyl-[protein] + malonyl-CoA. The protein operates within lipid metabolism; malonyl-CoA biosynthesis; malonyl-CoA from acetyl-CoA: step 1/1. In terms of biological role, component of the acetyl coenzyme A carboxylase (ACC) complex. Biotin carboxylase (BC) catalyzes the carboxylation of biotin on its carrier protein (BCCP) and then the CO(2) group is transferred by the transcarboxylase to acetyl-CoA to form malonyl-CoA. In Agrobacterium fabrum (strain C58 / ATCC 33970) (Agrobacterium tumefaciens (strain C58)), this protein is Acetyl-coenzyme A carboxylase carboxyl transferase subunit beta.